Consider the following 377-residue polypeptide: Probable dehydratase NIT22 (377 aa).

NADP(+)-binding residues include Lys-101 and Arg-196. Residues 220–243 are disordered; sequence ERGPKMNEHVPSTPPRRPDAVSSF. In terms of domain architecture, MaoC-like spans 233–332; that stretch reads PPRRPDAVSS…ILMWDMGLCK (100 aa). NADP(+) contacts are provided by Thr-265 and Ile-287.

The protein belongs to the short-chain dehydrogenases/reductases (SDR) family.

The protein operates within siderophore biosynthesis. Probable dehydratase; part of the gene cluster that mediates the biosynthesis of hydroxamate-containing siderophores that play a critical role in virulence via intracellular iron acquisition during macrophage infection. The chain is Probable dehydratase NIT22 from Ajellomyces capsulatus (Darling's disease fungus).